Reading from the N-terminus, the 293-residue chain is ATP synthase gamma chain (293 aa).

This sequence belongs to the ATPase gamma chain family. In terms of assembly, F-type ATPases have 2 components, CF(1) - the catalytic core - and CF(0) - the membrane proton channel. CF(1) has five subunits: alpha(3), beta(3), gamma(1), delta(1), epsilon(1). CF(0) has three main subunits: a, b and c.

The protein resides in the cell inner membrane. Functionally, produces ATP from ADP in the presence of a proton gradient across the membrane. The gamma chain is believed to be important in regulating ATPase activity and the flow of protons through the CF(0) complex. This Allorhizobium ampelinum (strain ATCC BAA-846 / DSM 112012 / S4) (Agrobacterium vitis (strain S4)) protein is ATP synthase gamma chain.